The primary structure comprises 1849 residues: UPF0606 protein KIAA1549L (1849 aa).

Polar residues predominate over residues 1-10 (MDHTASQNAQ). 4 disordered regions span residues 1–70 (MDHT…LLQL), 142–166 (ATANDSANPLHLSAAPENSRGPALS), 213–242 (PTENHASPSPVPEMPTLPAEGSDGSPPATR), and 529–586 (RHSV…ERNA). Polar residues-rich tracts occupy residues 529-541 (RHSVSHPQLQLPN) and 552-586 (PGPTSTGSLQEMLSDGTDTGSEISSDINSSPERNA). The stretch at 958–986 (KFAQTMEQRLQKAFQDAERKVLNTKSNLT) forms a coiled coil. Residues 1180-1200 (LWIIAAVLAPIAVVTVIIIII) traverse the membrane as a helical segment. Disordered regions lie at residues 1258–1338 (LPIR…EEEG), 1460–1546 (SKNR…SQPS), 1656–1679 (RSTSDIGSKTRMAESTGPEPAQLH), and 1769–1819 (SRYP…APLT). Polar residues-rich tracts occupy residues 1290-1319 (PSENGSVISNESGKPSSGRRSPQNVMAQQK), 1463-1482 (RQQMKNSVYRSRQSLNSPSP), and 1537-1546 (ETSTLSSQPS). 2 stretches are compositionally biased toward low complexity: residues 1769-1786 (SRYPQSSPSRLPRQYSQP) and 1795-1809 (QAPAPSTAASQQSLA).

The protein belongs to the UPF0606 family.

The protein localises to the membrane. The sequence is that of UPF0606 protein KIAA1549L (KIAA1549L) from Homo sapiens (Human).